The sequence spans 302 residues: Syntaxin-17 (302 aa).

Serine 2 carries the N-acetylserine modification. Residues 2-228 lie on the Cytoplasmic side of the membrane; it reads SEDEEKVKLR…KNLGKAAKYK (227 aa). The residue at position 41 (lysine 41) is an N6-acetyllysine. The stretch at 53–123 forms a coiled coil; it reads EEHINAGRTV…EELKKQFNDE (71 aa). Tyrosine 157 carries the post-translational modification Phosphotyrosine; by ABL1. In terms of domain architecture, t-SNARE coiled-coil homology spans 162–224; the sequence is IPRDQNAAES…EEGTKNLGKA (63 aa). Residues 229–249 form a helical membrane-spanning segment; the sequence is LAALPVAGALIGGVVGGPIGL. Positions 229–275 are necessary and sufficient for localization to autophagosome; that stretch reads LAALPVAGALIGGVVGGPIGLLAGFKVAGIAAALGGGVLGFTGGKLI. Residues 250 to 254 are Lumenal-facing; that stretch reads LAGFK. Residues 255 to 275 traverse the membrane as a helical segment; sequence VAGIAAALGGGVLGFTGGKLI. The Cytoplasmic segment spans residues 276–302; the sequence is QRRKQKMMEKLASSCPDLPSQTDKKCS. Serine 289 carries the phosphoserine modification. Positions 299–302 match the Endoplasmic reticulum retention signal motif; sequence KKCS.

It belongs to the syntaxin family. Forms a SNARE complex composed of VAMP8, SNAP29 and STX17 involved in fusion of autophagosome with lysosome. May interact with VTI1B. Probably interacts with BET1, SCFD1 and SEC22B. Interacts with PTPN2 and ABL1; involved in STX17 phosphorylation. Interacts with COPB1. Interacts with TMED9 and TMED10; the interaction is direct. Interacts with VAMP7. Interacts with RUBCNL/PACER; promoting targeting of RUBCNL/PACER to autophagosome. Interacts with VAMP8, SNAP29, VPS39 and VPS41; these interactions are increased in the absence of TMEM39A. Interacts with IRGM; promoting STX17 recruitment to autophagosomes. Interacts with ATG8 proteins GABARAP and MAP1LC3B. Interacts with RNF115; this interaction enhances STX17 stability which in turn promotes autophagosome maturation. Interacts with RAB39A (GTP-bound); the interaction promotes autophagosome-lysosome membrane fusion driven by STX17-SNAP29-VAMP8. Interacts with RAB39B; the interaction may promote a different fonction in autophagy as compared with RAB39A. Phosphorylated at Tyr-157 probably by ABL1. Dephosphorylation by PTPN2; regulates exit from the endoplasmic reticulum.

It localises to the endoplasmic reticulum membrane. Its subcellular location is the smooth endoplasmic reticulum membrane. The protein localises to the endoplasmic reticulum-Golgi intermediate compartment membrane. It is found in the cytoplasmic vesicle. The protein resides in the autophagosome membrane. It localises to the COPII-coated vesicle membrane. Its subcellular location is the cytoplasm. The protein localises to the cytosol. It is found in the mitochondrion membrane. The protein resides in the autolysosome membrane. Functionally, SNAREs, soluble N-ethylmaleimide-sensitive factor-attachment protein receptors, are essential proteins for fusion of cellular membranes. SNAREs localized on opposing membranes assemble to form a trans-SNARE complex, an extended, parallel four alpha-helical bundle that drives membrane fusion. STX17 is a SNARE of the autophagosome involved in autophagy through the direct control of autophagosome membrane fusion with the lysosome membrane. May also play a role in the early secretory pathway where it may maintain the architecture of the endoplasmic reticulum-Golgi intermediate compartment/ERGIC and Golgi and/or regulate transport between the endoplasmic reticulum, the ERGIC and the Golgi. This Bos taurus (Bovine) protein is Syntaxin-17.